The chain runs to 219 residues: Proteasome subunit beta (219 aa).

A propeptide spans 1–14 (removed in mature form; by autocatalysis); the sequence is MISNSEYHKEYMKG. The active-site Nucleophile is the threonine 15.

This sequence belongs to the peptidase T1B family. The 20S proteasome core is composed of 14 alpha and 14 beta subunits that assemble into four stacked heptameric rings, resulting in a barrel-shaped structure. The two inner rings, each composed of seven catalytic beta subunits, are sandwiched by two outer rings, each composed of seven alpha subunits. The catalytic chamber with the active sites is on the inside of the barrel. Has a gated structure, the ends of the cylinder being occluded by the N-termini of the alpha-subunits. Is capped at one or both ends by the proteasome regulatory ATPase, PAN.

The protein localises to the cytoplasm. It carries out the reaction Cleavage of peptide bonds with very broad specificity.. With respect to regulation, the formation of the proteasomal ATPase PAN-20S proteasome complex, via the docking of the C-termini of PAN into the intersubunit pockets in the alpha-rings, triggers opening of the gate for substrate entry. Interconversion between the open-gate and close-gate conformations leads to a dynamic regulation of the 20S proteasome proteolysis activity. Its function is as follows. Component of the proteasome core, a large protease complex with broad specificity involved in protein degradation. In Methanococcus maripaludis (strain C6 / ATCC BAA-1332), this protein is Proteasome subunit beta.